Here is a 359-residue protein sequence, read N- to C-terminus: tRNA-specific 2-thiouridylase MnmA (359 aa).

ATP contacts are provided by residues 6 to 13 (AMSGGVDS) and Leu-32. Residue Cys-101 is the Nucleophile of the active site. A disulfide bridge connects residues Cys-101 and Cys-193. An ATP-binding site is contributed by Gly-125. The segment at 143–145 (KDQ) is interaction with tRNA. The active-site Cysteine persulfide intermediate is Cys-193.

This sequence belongs to the MnmA/TRMU family.

It localises to the cytoplasm. It catalyses the reaction S-sulfanyl-L-cysteinyl-[protein] + uridine(34) in tRNA + AH2 + ATP = 2-thiouridine(34) in tRNA + L-cysteinyl-[protein] + A + AMP + diphosphate + H(+). In terms of biological role, catalyzes the 2-thiolation of uridine at the wobble position (U34) of tRNA, leading to the formation of s(2)U34. This chain is tRNA-specific 2-thiouridylase MnmA, found in Mycobacterium sp. (strain JLS).